The primary structure comprises 85 residues: Toxin BmKaIT1 (85 aa).

The signal sequence occupies residues 1-19 (MNYLVMISFAFLLMTGVES). One can recognise an LCN-type CS-alpha/beta domain in the interval 21–83 (RDAYIAQNYN…VPIRVPGKCH (63 aa)). 4 disulfide bridges follow: cysteine 31/cysteine 82, cysteine 35/cysteine 55, cysteine 41/cysteine 65, and cysteine 45/cysteine 67. Positions 84–85 (RR) are cleaved as a propeptide — removed by a carboxypeptidase.

This sequence belongs to the long (4 C-C) scorpion toxin superfamily. Sodium channel inhibitor family. Alpha subfamily. As to expression, expressed by the venom gland.

It is found in the secreted. In terms of biological role, alpha toxins bind voltage-independently at site-3 of sodium channels (Nav) and inhibit the inactivation of the activated channels, thereby blocking neuronal transmission. Shows a high toxicity toward insects and moderate toxicity against mammals. This Olivierus martensii (Manchurian scorpion) protein is Toxin BmKaIT1.